Consider the following 267-residue polypeptide: Type II pantothenate kinase (267 aa).

D6 to K13 is a binding site for ATP. E70 (proton acceptor) is an active-site residue. ATP is bound by residues T99, G121–Q125, Y137, and S225.

It belongs to the type II pantothenate kinase family. In terms of assembly, homodimer.

It is found in the cytoplasm. It catalyses the reaction (R)-pantothenate + ATP = (R)-4'-phosphopantothenate + ADP + H(+). Its pathway is cofactor biosynthesis; coenzyme A biosynthesis; CoA from (R)-pantothenate: step 1/5. Functionally, catalyzes the phosphorylation of pantothenate (Pan), the first step in CoA biosynthesis. The sequence is that of Type II pantothenate kinase from Staphylococcus aureus (strain USA300).